The sequence spans 278 residues: Cyclin-C (278 aa).

The 99-residue stretch at 41–139 (NVIQALGEHL…ILECEFYLLE (99 aa)) folds into the Cyclin N-terminal domain. The segment at 247–278 (TILSKMPKPKPPPNSEGEQGPNGSQNSSYSQS) is disordered. Over residues 267–278 (PNGSQNSSYSQS) the composition is skewed to polar residues. At Ser-270 the chain carries Phosphoserine.

This sequence belongs to the cyclin family. Cyclin C subfamily. Component of the Mediator complex, which is composed of MED1, MED4, MED6, MED7, MED8, MED9, MED10, MED11, MED12, MED13, MED13L, MED14, MED15, MED16, MED17, MED18, MED19, MED20, MED21, MED22, MED23, MED24, MED25, MED26, MED27, MED29, MED30, MED31, CCNC, CDK8 and CDC2L6/CDK11. The MED12, MED13, CCNC and CDK8 subunits form a distinct module termed the CDK8 module. Mediator containing the CDK8 module is less active than Mediator lacking this module in supporting transcriptional activation. Individual preparations of the Mediator complex lacking one or more distinct subunits have been variously termed ARC, CRSP, DRIP, PC2, SMCC and TRAP. The cylin/CDK pair formed by CCNC/CDK8 also associates with the large subunit of RNA polymerase II.

It is found in the nucleus. Component of the Mediator complex, a coactivator involved in regulated gene transcription of nearly all RNA polymerase II-dependent genes. Mediator functions as a bridge to convey information from gene-specific regulatory proteins to the basal RNA polymerase II transcription machinery. Mediator is recruited to promoters by direct interactions with regulatory proteins and serves as a scaffold for the assembly of a functional preinitiation complex with RNA polymerase II and the general transcription factors. Binds to and activates cyclin-dependent kinase CDK8 that phosphorylates the CTD (C-terminal domain) of the large subunit of RNA polymerase II (RNAp II), which may inhibit the formation of a transcription initiation complex. The polypeptide is Cyclin-C (Ccnc) (Rattus norvegicus (Rat)).